The sequence spans 342 residues: Ribosomal RNA small subunit methyltransferase C (342 aa).

Belongs to the methyltransferase superfamily. RsmC family. Monomer.

The protein resides in the cytoplasm. It carries out the reaction guanosine(1207) in 16S rRNA + S-adenosyl-L-methionine = N(2)-methylguanosine(1207) in 16S rRNA + S-adenosyl-L-homocysteine + H(+). In terms of biological role, specifically methylates the guanine in position 1207 of 16S rRNA in the 30S particle. The sequence is that of Ribosomal RNA small subunit methyltransferase C from Salmonella paratyphi B (strain ATCC BAA-1250 / SPB7).